The sequence spans 921 residues: Probable dipeptidyl-aminopeptidase B (921 aa).

The interval 1–33 is disordered; the sequence is MAGHTEENAQLLSTEQESVSRHSSDSAASTAST. The Cytoplasmic portion of the chain corresponds to 1 to 109; that stretch reads MAGHTEENAQ…NKSVDKKLRK (109 aa). Positions 8-17 are enriched in polar residues; it reads NAQLLSTEQE. A helical; Signal-anchor for type II membrane protein membrane pass occupies residues 110 to 130; that stretch reads LIWIVGGVFIGAWVLALFIFL. Residues 131–921 lie on the Vacuolar side of the membrane; that stretch reads GKQAYKHSSE…VPLQIDAAKV (791 aa). A glycan (N-linked (GlcNAc...) asparagine) is linked at N362. S768 serves as the catalytic Charge relay system. N822 carries an N-linked (GlcNAc...) asparagine glycan. Residues D845 and H878 each act as charge relay system in the active site.

This sequence belongs to the peptidase S9B family.

It is found in the vacuole membrane. The catalysed reaction is Release of an N-terminal dipeptide, Xaa-Yaa-|-Zaa-, from a polypeptide, preferentially when Yaa is Pro, provided Zaa is neither Pro nor hydroxyproline.. In terms of biological role, type IV dipeptidyl-peptidase which removes N-terminal dipeptides sequentially from polypeptides having unsubstituted N-termini provided that the penultimate residue is proline. This is Probable dipeptidyl-aminopeptidase B (dapB) from Sclerotinia sclerotiorum (strain ATCC 18683 / 1980 / Ss-1) (White mold).